Consider the following 309-residue polypeptide: Taste receptor type 2 member 45 (309 aa).

Residue M1 is a topological domain, extracellular. Residues 2–22 (ITFLPIIFSILVVVTFVIGNF) traverse the membrane as a helical segment. Topologically, residues 23–55 (ANGFIALVNSTEWVKRQKISFADQIVTALAVSR) are cytoplasmic. The helical transmembrane segment at 56–76 (VGLLWVLLLNWYSTVLNPAFY) threads the bilayer. Residues 77 to 98 (SVELRTTAYNIWAVTGHFSNWL) are Extracellular-facing. The chain crosses the membrane as a helical span at residues 99–119 (ATSLSIFYLLKIANFSNLIFL). Residues 120-126 (HLKRRVK) are Cytoplasmic-facing. A helical transmembrane segment spans residues 127 to 147 (SVILVMLLGPLLFLACHLFVV). Residues 148–178 (NMNQIVWTKEYEGNMTWKIKLRRAMYLSDTT) are Extracellular-facing. N-linked (GlcNAc...) asparagine glycosylation is present at N161. Residues 179-199 (VTMLANLVPFTVTLISFLLLV) traverse the membrane as a helical segment. At 200–229 (CSLCEHLKKMQLHGKGSQDPSTKVHIKALQ) the chain is on the cytoplasmic side. The chain crosses the membrane as a helical span at residues 230–250 (TVISFLLLCAIYFVSVIISVW). Residues 251–259 (SFKNLENKP) are Extracellular-facing. The chain crosses the membrane as a helical span at residues 260–280 (VFMFCQAIGFSCSSAHPFILI). Over 281–309 (WGNKKLKQPFLSVLWQMRYWVKGEKPSSS) the chain is Cytoplasmic.

The protein belongs to the G-protein coupled receptor T2R family.

The protein localises to the membrane. Functionally, receptor that may play a role in the perception of bitterness and is gustducin-linked. May play a role in sensing the chemical composition of the gastrointestinal content. The activity of this receptor may stimulate alpha gustducin, mediate PLC-beta-2 activation and lead to the gating of TRPM5. This is Taste receptor type 2 member 45 (TAS2R45) from Pan paniscus (Pygmy chimpanzee).